The sequence spans 94 residues: Immune protein Tsi6 (94 aa).

Immunity protein that plays a role in preventing early activation of toxin Tse6. In Pseudomonas aeruginosa (strain ATCC 15692 / DSM 22644 / CIP 104116 / JCM 14847 / LMG 12228 / 1C / PRS 101 / PAO1), this protein is Immune protein Tsi6.